Here is a 628-residue protein sequence, read N- to C-terminus: DNA mismatch repair protein MutL (628 aa).

The segment at 335–411 is disordered; it reads SVDIEPESEQ…ASRNSEVSLP (77 aa). Over residues 343 to 353 the composition is skewed to polar residues; it reads EQTTAWQTSPT.

This sequence belongs to the DNA mismatch repair MutL/HexB family.

Functionally, this protein is involved in the repair of mismatches in DNA. It is required for dam-dependent methyl-directed DNA mismatch repair. May act as a 'molecular matchmaker', a protein that promotes the formation of a stable complex between two or more DNA-binding proteins in an ATP-dependent manner without itself being part of a final effector complex. In Shewanella pealeana (strain ATCC 700345 / ANG-SQ1), this protein is DNA mismatch repair protein MutL.